The primary structure comprises 172 residues: ATP synthase subunit b, chloroplastic (172 aa).

The chain crosses the membrane as a helical span at residues 15-37 (ILATNLINLSAVLGVLIFFGKGV).

The protein belongs to the ATPase B chain family. In terms of assembly, F-type ATPases have 2 components, F(1) - the catalytic core - and F(0) - the membrane proton channel. F(1) has five subunits: alpha(3), beta(3), gamma(1), delta(1), epsilon(1). F(0) has four main subunits: a(1), b(1), b'(1) and c(10-14). The alpha and beta chains form an alternating ring which encloses part of the gamma chain. F(1) is attached to F(0) by a central stalk formed by the gamma and epsilon chains, while a peripheral stalk is formed by the delta, b and b' chains.

The protein resides in the plastid. Its subcellular location is the chloroplast thylakoid membrane. Functionally, f(1)F(0) ATP synthase produces ATP from ADP in the presence of a proton or sodium gradient. F-type ATPases consist of two structural domains, F(1) containing the extramembraneous catalytic core and F(0) containing the membrane proton channel, linked together by a central stalk and a peripheral stalk. During catalysis, ATP synthesis in the catalytic domain of F(1) is coupled via a rotary mechanism of the central stalk subunits to proton translocation. Its function is as follows. Component of the F(0) channel, it forms part of the peripheral stalk, linking F(1) to F(0). The protein is ATP synthase subunit b, chloroplastic of Pisum sativum (Garden pea).